The primary structure comprises 547 residues: Putative nitric oxide synthase (547 aa).

A compositionally biased stretch (low complexity) spans 24 to 40 (QLAPNPSSFSPTRAAST). Disordered regions lie at residues 24–57 (QLAP…SRGD) and 72–91 (VLAP…RKAL). Residues 81 to 91 (RRRRREKRKAL) are compositionally biased toward basic residues. The 177-residue stretch at 167-343 (ADQLRDKLSY…LYDTPGVHLH (177 aa)) folds into the CP-type G domain.

Belongs to the TRAFAC class YlqF/YawG GTPase family. NOA1 subfamily.

It catalyses the reaction 2 L-arginine + 3 NADPH + 4 O2 + H(+) = 2 L-citrulline + 2 nitric oxide + 3 NADP(+) + 4 H2O. Functionally, produces nitric oxide (NO) which is a messenger molecule involved in hormonal signaling and defense responses in plant. This chain is Putative nitric oxide synthase, found in Oryza sativa subsp. japonica (Rice).